The following is a 46-amino-acid chain: Antimicrobial peptide eNAP-2 (46 aa).

A WAP domain is found at 12–46 (RPGRCPTVPPGTFGHCACLCTGDASEPKGQKCCSN).

Has antibiotic activity against several equine uterine pathogens; S.zooepidemicus, E.coli and P.aeruginosa. Highly efficient against S.zoopedemicus. Not active against K.pneumoniae. Selectively inactivates microbial serine proteases (subtilisin A and proteinase K) without inhibiting mammalian serine proteases (human neutrophil elastase, human cathepsin G and bovine pancreatic trypsin). This Equus caballus (Horse) protein is Antimicrobial peptide eNAP-2.